The sequence spans 162 residues: Probable chemoreceptor glutamine deamidase CheD (162 aa).

This sequence belongs to the CheD family.

The catalysed reaction is L-glutaminyl-[protein] + H2O = L-glutamyl-[protein] + NH4(+). Its function is as follows. Probably deamidates glutamine residues to glutamate on methyl-accepting chemotaxis receptors (MCPs), playing an important role in chemotaxis. The polypeptide is Probable chemoreceptor glutamine deamidase CheD (Clostridium novyi (strain NT)).